The sequence spans 179 residues: MINKNDSVLNNQFWQSYNHQGFMVTQFSDLINYISNWARSNSLWPMTFGLACCAVEMMHTAASRYDLDRYGVMFRASPRQADVMIVAGTLTNKMAPALRKVYDQMTEPRYVISMGSCANGGGYYHYSYSVVRGCDRIVPVDIYVPGCPPTAEALLYGIFCLQQKINRGNTSITRKSTQD.

[4Fe-4S] cluster contacts are provided by Cys52, Cys53, Cys117, and Cys147.

Belongs to the complex I 20 kDa subunit family. As to quaternary structure, NDH-1 is composed of 14 different subunits. Subunits NuoB, C, D, E, F, and G constitute the peripheral sector of the complex. [4Fe-4S] cluster is required as a cofactor.

The protein localises to the cell inner membrane. It carries out the reaction a quinone + NADH + 5 H(+)(in) = a quinol + NAD(+) + 4 H(+)(out). NDH-1 shuttles electrons from NADH, via FMN and iron-sulfur (Fe-S) centers, to quinones in the respiratory chain. The immediate electron acceptor for the enzyme in this species is believed to be ubiquinone. Couples the redox reaction to proton translocation (for every two electrons transferred, four hydrogen ions are translocated across the cytoplasmic membrane), and thus conserves the redox energy in a proton gradient. The protein is NADH-quinone oxidoreductase subunit B of Ehrlichia chaffeensis (strain ATCC CRL-10679 / Arkansas).